The primary structure comprises 51 residues: MARNKPLGKKLRLAAALNSNRNPPLWVIAKTKRRVTRSPARRHWRRQKLKA.

Residues 32–51 (KRRVTRSPARRHWRRQKLKA) are disordered.

Belongs to the eukaryotic ribosomal protein eL39 family.

This Pyrobaculum calidifontis (strain DSM 21063 / JCM 11548 / VA1) protein is Large ribosomal subunit protein eL39.